A 375-amino-acid chain; its full sequence is MKKKVLIGLSGGVDSSVAALILLQQGYDVEAVFMRNWDSATNMDFRGNPTLYDETCEQEKDYQDALKVANKLGIKLHRVDFIHEYWDRVFSYFIDEYEKNRTPNPDVLCNNEIKFKAFIDYSEKFKPDYIAMGHYAQIDHTGDEPKLIRAVDSNKDQTYFLSQLKTEQLRNVLFPIGNLPKSEVRRIAKEHDLATADKKDSTGICFIGERHFNEFLLNYLPAKEGDMRRLDGTFIKRHFGLMNYTIGQRKGLGIGGTTDTTDAWFVVGKDLSTNTLYVEPGFEHPYLYSDEALITEVKWRGAKRDGKFTAKFRYRQEDQDVEIKWIDDETFKVFYPQKIRAVTPGQVCAIYEDEVCVGSGFISVVYNEGEKRLYS.

Residues 8–15 (GLSGGVDS) and methionine 34 contribute to the ATP site. Residues 104–106 (NPD) form an interaction with target base in tRNA region. The active-site Nucleophile is the cysteine 109. Cysteines 109 and 205 form a disulfide. Residue glycine 133 coordinates ATP. Positions 155-157 (KDQ) are interaction with tRNA. The active-site Cysteine persulfide intermediate is the cysteine 205. Residues 313 to 314 (RY) are interaction with tRNA.

It belongs to the MnmA/TRMU family.

It is found in the cytoplasm. It carries out the reaction S-sulfanyl-L-cysteinyl-[protein] + uridine(34) in tRNA + AH2 + ATP = 2-thiouridine(34) in tRNA + L-cysteinyl-[protein] + A + AMP + diphosphate + H(+). Its function is as follows. Catalyzes the 2-thiolation of uridine at the wobble position (U34) of tRNA, leading to the formation of s(2)U34. This chain is tRNA-specific 2-thiouridylase MnmA, found in Acholeplasma laidlawii (strain PG-8A).